The following is a 295-amino-acid chain: Protoheme IX farnesyltransferase (295 aa).

The next 9 membrane-spanning stretches (helical) occupy residues 8–28, 35–55, 83–103, 107–127, 132–152, 162–182, 208–228, 229–249, and 263–283; these read ITKP…FFLA, GGLF…GCVF, GVTL…LWFG, LATA…SLYL, IYGT…GYCA, LTLL…IAIF, IFWY…GGYA, GYGY…MALR, and VFIF…IDFQ.

It belongs to the UbiA prenyltransferase family. Protoheme IX farnesyltransferase subfamily.

Its subcellular location is the cell inner membrane. The catalysed reaction is heme b + (2E,6E)-farnesyl diphosphate + H2O = Fe(II)-heme o + diphosphate. It participates in porphyrin-containing compound metabolism; heme O biosynthesis; heme O from protoheme: step 1/1. In terms of biological role, converts heme B (protoheme IX) to heme O by substitution of the vinyl group on carbon 2 of heme B porphyrin ring with a hydroxyethyl farnesyl side group. In Chromohalobacter salexigens (strain ATCC BAA-138 / DSM 3043 / CIP 106854 / NCIMB 13768 / 1H11), this protein is Protoheme IX farnesyltransferase.